A 122-amino-acid chain; its full sequence is MIQQETRLKVADNSGAREILTIKVLGGSGRKFANIGDVIVASVKQATPGGAVKKGDVVKAVIVRTKTGARRPDGSYIKFDDNAAVIIRDDKTPRGTRIFGPVARELREGGYMKIVSLAPEVL.

The protein belongs to the universal ribosomal protein uL14 family. Part of the 50S ribosomal subunit. Forms a cluster with proteins L3 and L19. In the 70S ribosome, L14 and L19 interact and together make contacts with the 16S rRNA in bridges B5 and B8.

Functionally, binds to 23S rRNA. Forms part of two intersubunit bridges in the 70S ribosome. The protein is Large ribosomal subunit protein uL14 of Streptococcus agalactiae serotype Ia (strain ATCC 27591 / A909 / CDC SS700).